Here is a 246-residue protein sequence, read N- to C-terminus: Octanoyltransferase (246 aa).

The BPL/LPL catalytic domain occupies 50-231 (PDTDDEIWVV…RLIAHLDGAT (182 aa)). Substrate-binding positions include 90–97 (RGGQITYH), 162–164 (ALG), and 175–177 (GLS). The active-site Acyl-thioester intermediate is the C193.

This sequence belongs to the LipB family.

It localises to the cytoplasm. The catalysed reaction is octanoyl-[ACP] + L-lysyl-[protein] = N(6)-octanoyl-L-lysyl-[protein] + holo-[ACP] + H(+). Its pathway is protein modification; protein lipoylation via endogenous pathway; protein N(6)-(lipoyl)lysine from octanoyl-[acyl-carrier-protein]: step 1/2. Catalyzes the transfer of endogenously produced octanoic acid from octanoyl-acyl-carrier-protein onto the lipoyl domains of lipoate-dependent enzymes. Lipoyl-ACP can also act as a substrate although octanoyl-ACP is likely to be the physiological substrate. The chain is Octanoyltransferase from Burkholderia pseudomallei (strain 1106a).